A 189-amino-acid polypeptide reads, in one-letter code: Interferon alpha-21 (189 aa).

Positions 1-23 (MALSFSLLMAVLVLSYKSICSLG) are cleaved as a signal peptide. Intrachain disulfides connect C24/C122 and C52/C162.

The protein belongs to the alpha/beta interferon family.

The protein resides in the secreted. In terms of biological role, produced by macrophages, IFN-alpha have antiviral activities. Interferon stimulates the production of two enzymes: a protein kinase and an oligoadenylate synthetase. The polypeptide is Interferon alpha-21 (IFNA21) (Homo sapiens (Human)).